The chain runs to 500 residues: MNYFPWLTIIVVLPISAGSLIFFLPHRGNKVIRWYTICICVLELLLTTYAFCYHFQLDDPLVQLTEDYKWINFFDFYWRLGIDGLSIGPILLTGFITTLATLAAWPVTRDSRLFHFLMLAMYSGQIGSFSSRDLLLFFLMWELELIPVYLLLSMWGGKKRLYSATKFILYTAGGSIFLLIGVLGIGLYGSTEPTLNFETLTNQSYPIALEIIFYIGFLIAFAVKSPIIPLHTWLPDTHGEAHYSTCMLLAGILLKMGAYGLVRINMELLPHAHSLFSPWLVVVGTMQIIYAASTSSGQRNLKKRIAYSSVSHMGFIIIGIGSITDPGLNGAILQIVSHGFIGAALFFLAGTSYDRIRLVYLDEMGGMAISMPKIFTMFSILSMASLALPGMSGFVAELIVFFGIITSQKYFLMAKILITFVMAIGMILTPIYSLSMSRQMFYGYKLINAQNFSFFDSGPRELFVSISILLPVIGIGIYPDFLLSLSSDKVEAILSNYFNR.

Helical transmembrane passes span 4–24, 37–57, 87–107, 113–130, 134–154, 167–187, 207–227, 242–262, 272–292, 305–325, 330–350, 386–406, 411–431, and 462–482; these read FPWLTIIVVLPISAGSLIFFL, ICICVLELLLTTYAFCYHFQL, IGPILLTGFITTLATLAAWPV, LFHFLMLAMYSGQIGSFS, LLLFFLMWELELIPVYLLLSM, FILYTAGGSIFLLIGVLGIGL, IALEIIFYIGFLIAFAVKSPI, HYSTCMLLAGILLKMGAYGLV, AHSLFSPWLVVVGTMQIIYAA, IAYSSVSHMGFIIIGIGSITD, GAILQIVSHGFIGAALFFLAG, LALPGMSGFVAELIVFFGIIT, FLMAKILITFVMAIGMILTPI, and LFVSISILLPVIGIGIYPDFL.

Belongs to the complex I subunit 4 family.

Its subcellular location is the plastid. The protein localises to the chloroplast thylakoid membrane. It carries out the reaction a plastoquinone + NADH + (n+1) H(+)(in) = a plastoquinol + NAD(+) + n H(+)(out). The enzyme catalyses a plastoquinone + NADPH + (n+1) H(+)(in) = a plastoquinol + NADP(+) + n H(+)(out). In Carica papaya (Papaya), this protein is NAD(P)H-quinone oxidoreductase chain 4, chloroplastic.